The sequence spans 336 residues: MTLKIGVIGTGAIGQDHTRRINQVLAGARVAALNDVNRANAEACQRDHAPEARIFDDPHALIRDAEVDAILVCSWGQTHEEYVLAAIAAGKPCFCEKPLATTAEGARRIVEAEEAAGKRLVQVGFMRRYDPGYVALKKAVAEVTGAPLMVHAAHRNPRVGENYLTPMAIHDTLIHEIDVLRWLLDDDYVGARVLFPRKSPRAHEKLRDPQVVVLETARGVVIDVEVFVNCHYGYDIQCEIVGEDGIARLPEPMGIQTRSGAVLGQPILMDWKDRFIDSYDYELADFLKAAARGTAAGPTAWDGYVAAVTADACVAAQEAGGESVAIELPARPALYA.

This sequence belongs to the Gfo/Idh/MocA family. In terms of assembly, homotetramer.

The catalysed reaction is myo-inositol + NAD(+) = scyllo-inosose + NADH + H(+). Its function is as follows. Involved in the oxidation of myo-inositol (MI) to 2-keto-myo-inositol (2KMI or 2-inosose). This chain is Inositol 2-dehydrogenase, found in Paracoccus denitrificans (strain Pd 1222).